Reading from the N-terminus, the 95-residue chain is Aspartyl/glutamyl-tRNA(Asn/Gln) amidotransferase subunit C (95 aa).

The protein belongs to the GatC family. In terms of assembly, heterotrimer of A, B and C subunits.

The catalysed reaction is L-glutamyl-tRNA(Gln) + L-glutamine + ATP + H2O = L-glutaminyl-tRNA(Gln) + L-glutamate + ADP + phosphate + H(+). It carries out the reaction L-aspartyl-tRNA(Asn) + L-glutamine + ATP + H2O = L-asparaginyl-tRNA(Asn) + L-glutamate + ADP + phosphate + 2 H(+). Allows the formation of correctly charged Asn-tRNA(Asn) or Gln-tRNA(Gln) through the transamidation of misacylated Asp-tRNA(Asn) or Glu-tRNA(Gln) in organisms which lack either or both of asparaginyl-tRNA or glutaminyl-tRNA synthetases. The reaction takes place in the presence of glutamine and ATP through an activated phospho-Asp-tRNA(Asn) or phospho-Glu-tRNA(Gln). This Ruthia magnifica subsp. Calyptogena magnifica protein is Aspartyl/glutamyl-tRNA(Asn/Gln) amidotransferase subunit C.